Here is a 292-residue protein sequence, read N- to C-terminus: Phosphatidylglycerol--prolipoprotein diacylglyceryl transferase (292 aa).

Transmembrane regions (helical) follow at residues 18 to 38 (LFGVTFALRWYALAYIAGLLI), 67 to 87 (LLTWVILGVILGGRLGFVLFY), and 105 to 125 (GGMSFHGGFLGVMTALVAFCL). A 1,2-diacyl-sn-glycero-3-phospho-(1'-sn-glycerol) is bound at residue R150. 3 helical membrane-spanning segments follow: residues 193-213 (QIYEAGLEGILLFTVLSLLVW), 222-242 (GSVSGMFLAGYGATRFLVEFV), and 266-286 (GLTMGQILSLPMILLGLYLIL).

The protein belongs to the Lgt family.

Its subcellular location is the cell inner membrane. It catalyses the reaction L-cysteinyl-[prolipoprotein] + a 1,2-diacyl-sn-glycero-3-phospho-(1'-sn-glycerol) = an S-1,2-diacyl-sn-glyceryl-L-cysteinyl-[prolipoprotein] + sn-glycerol 1-phosphate + H(+). It participates in protein modification; lipoprotein biosynthesis (diacylglyceryl transfer). In terms of biological role, catalyzes the transfer of the diacylglyceryl group from phosphatidylglycerol to the sulfhydryl group of the N-terminal cysteine of a prolipoprotein, the first step in the formation of mature lipoproteins. In Cereibacter sphaeroides (strain ATCC 17023 / DSM 158 / JCM 6121 / CCUG 31486 / LMG 2827 / NBRC 12203 / NCIMB 8253 / ATH 2.4.1.) (Rhodobacter sphaeroides), this protein is Phosphatidylglycerol--prolipoprotein diacylglyceryl transferase.